The sequence spans 544 residues: Probable protein kinase UbiB (544 aa).

The 382-residue stretch at 123–504 folds into the Protein kinase domain; the sequence is DFDENALASA…QRWQKKMFVL (382 aa). ATP contacts are provided by residues 129–137 and Lys155; that span reads LASASIAQV. Asp290 (proton acceptor) is an active-site residue. Helical transmembrane passes span 501–521 and 523–543; these read MFVLIVGIVIFSVTLWQFAAL and LAISAGLFLVGFLVWLIGFLL.

This sequence belongs to the ABC1 family. UbiB subfamily.

It localises to the cell inner membrane. Its pathway is cofactor biosynthesis; ubiquinone biosynthesis [regulation]. Functionally, is probably a protein kinase regulator of UbiI activity which is involved in aerobic coenzyme Q (ubiquinone) biosynthesis. The polypeptide is Probable protein kinase UbiB (Histophilus somni (strain 129Pt) (Haemophilus somnus)).